A 554-amino-acid chain; its full sequence is Sesquiterpene synthase 14a (554 aa).

Residues Asp305, Asp309, Asp449, and Glu457 each coordinate Mg(2+). Positions 305–309 (DDLYD) match the DDXXD motif motif.

Belongs to the terpene synthase family. Tpsa subfamily. It depends on Mg(2+) as a cofactor. Requires Mn(2+) as cofactor. In terms of tissue distribution, mostly expressed in stem trichomes.

It carries out the reaction (2E,6E)-farnesyl diphosphate = beta-bisabolene + diphosphate. It catalyses the reaction (2E,6E)-farnesyl diphosphate = (Z)-alpha-bisabolene + diphosphate. The catalysed reaction is (2E,6E)-farnesyl diphosphate = beta-acoradiene + diphosphate. The enzyme catalyses (2E,6E)-farnesyl diphosphate = (E)-gamma-bisabolene + diphosphate. It carries out the reaction (2E,6E)-farnesyl diphosphate = (E)-beta-farnesene + diphosphate. It catalyses the reaction (2E,6E)-farnesyl diphosphate = (Z)-beta-farnesene + diphosphate. The catalysed reaction is (2E)-geranyl diphosphate = limonene + diphosphate. The enzyme catalyses (2E)-geranyl diphosphate = beta-myrcene + diphosphate. It functions in the pathway secondary metabolite biosynthesis; terpenoid biosynthesis. Functionally, sesquiterpene synthase involved in the biosynthesis of volatile compounds. Mediates the conversion of (2E,6E)-farnesyl diphosphate ((EE)-FPP) into beta-bisabolene, beta-farnesene, (E)-gamma-bisabolene, beta-acoradiene, selinene and (Z)-alpha-bisabolene. Low or no activity with (2Z,6Z)-farnesyl diphosphate ((ZZ)-FPP). Can act with a low efficiency as a monoterpene synthase with geranyl diphosphate (GPP) as substrate, thus producing beta-myrcene and limonene. This is Sesquiterpene synthase 14a from Solanum habrochaites (Wild tomato).